Consider the following 274-residue polypeptide: CTO1 family protein C17G9.12c (274 aa).

It belongs to the CTO1 family.

The protein localises to the cytoplasm. It is found in the nucleus. In Schizosaccharomyces pombe (strain 972 / ATCC 24843) (Fission yeast), this protein is CTO1 family protein C17G9.12c.